The following is a 370-amino-acid chain: Anhydro-N-acetylmuramic acid kinase (370 aa).

12–19 (GTSLDGVD) is a binding site for ATP.

Belongs to the anhydro-N-acetylmuramic acid kinase family.

It carries out the reaction 1,6-anhydro-N-acetyl-beta-muramate + ATP + H2O = N-acetyl-D-muramate 6-phosphate + ADP + H(+). It functions in the pathway amino-sugar metabolism; 1,6-anhydro-N-acetylmuramate degradation. The protein operates within cell wall biogenesis; peptidoglycan recycling. Catalyzes the specific phosphorylation of 1,6-anhydro-N-acetylmuramic acid (anhMurNAc) with the simultaneous cleavage of the 1,6-anhydro ring, generating MurNAc-6-P. Is required for the utilization of anhMurNAc either imported from the medium or derived from its own cell wall murein, and thus plays a role in cell wall recycling. This chain is Anhydro-N-acetylmuramic acid kinase, found in Yersinia pseudotuberculosis serotype O:1b (strain IP 31758).